The primary structure comprises 94 residues: Putative toxin RelE4 (94 aa).

This sequence belongs to the RelE toxin family.

In terms of biological role, toxic component of a type II toxin-antitoxin (TA) system. Its cognate antitoxin is RelB4 (Potential). The sequence is that of Putative toxin RelE4 (relE4) from Methanocaldococcus jannaschii (strain ATCC 43067 / DSM 2661 / JAL-1 / JCM 10045 / NBRC 100440) (Methanococcus jannaschii).